Reading from the N-terminus, the 102-residue chain is Small ribosomal subunit protein uS10 (102 aa).

This sequence belongs to the universal ribosomal protein uS10 family. As to quaternary structure, part of the 30S ribosomal subunit.

Its function is as follows. Involved in the binding of tRNA to the ribosomes. This is Small ribosomal subunit protein uS10 from Levilactobacillus brevis (strain ATCC 367 / BCRC 12310 / CIP 105137 / JCM 1170 / LMG 11437 / NCIMB 947 / NCTC 947) (Lactobacillus brevis).